We begin with the raw amino-acid sequence, 195 residues long: O-methyltransferase (195 aa).

Belongs to the methyltransferase superfamily.

The protein operates within secondary metabolite biosynthesis. O-methyltransferase; part of the gene cluster that mediates the biosynthesis of pyrophen and campyrone B, which represent a class of fungal amino acid-derived alpha-pyrone natural products. The first step of pyrophen biosynthesis is catalyzed by the PKS-NRPS hybrid synthetase ATPKS that uptakes and condensates L-phenylalanine and malonyl-CoA in order to produce desmethyldesacetylpyrophen. Although the A domain does not discriminate between 2 enantiomeric phenylalanines, the downstream KS domain must play a gate keeping role to stereoselectively accept the L-phenylalanyl-S-phosphopantetheine (Ppant)-T domain intermediate for chain elongation. The resulting amino acid derived diketide is off-loaded through lactonization to yield the alpha-pyrone intermediate desmethyldesacetylpyrophen. The cluster-specific O-methyltransferase (OMT) then methylates desmethyldesacetylpyrophen to desacetylpyrophen, which is further acetylated to pyrophen by an endogenous yet unidentified N-acetyltransferase. ATPKS has relaxed substrate specificity to activate and extend branched-chain amino acid L-leucine to produce small amounts of campyrone B. The chain is O-methyltransferase from Aspergillus niger (strain ATCC 1015 / CBS 113.46 / FGSC A1144 / LSHB Ac4 / NCTC 3858a / NRRL 328 / USDA 3528.7).